A 465-amino-acid chain; its full sequence is Monogalactosyldiacylglycerol synthase 3, chloroplastic (465 aa).

Residues His86, Arg255, 365–369, and Glu387 each bind UDP; that span reads GTIAE.

Belongs to the glycosyltransferase 28 family. As to expression, expressed mainly in roots. Detected in flowers, leaves, stems, siliques and pollen tubes.

The protein resides in the plastid. It is found in the chloroplast outer membrane. The enzyme catalyses a 1,2-diacyl-sn-glycerol + UDP-alpha-D-galactose = a 1,2-diacyl-3-O-(beta-D-galactosyl)-sn-glycerol + UDP + H(+). It catalyses the reaction 1,2-di-(9Z,12Z-octadecadienoyl)-sn-glycerol + UDP-alpha-D-galactose = 1,2-di-(9Z,12Z-octadecadienoyl)-3-beta-D-galactosyl-sn-glycerol + UDP + H(+). It carries out the reaction 1-(9Z-octadecenoyl)-2-hexadecanoyl-sn-glycerol + UDP-alpha-D-galactose = 1-(9Z-octadecenoyl)-2-hexadecanoyl-3-beta-D-galactosyl-sn-glycerol + UDP + H(+). The catalysed reaction is 1,2-di-(9Z-octadecenoyl)-sn-glycerol + UDP-alpha-D-galactose = 1,2-di-(9Z-octadecenoyl)-3-beta-D-galactosyl-sn-glycerol + UDP + H(+). Inhibited by galvestine-1. In terms of biological role, involved in the synthesis of monogalactosyldiacylglycerol, the major structural component of photosynthetic membranes and in the chloroplast envelope biogenesis. Can use both prokaryotic (18:1/16:0) or eukaryotic (18:2/18:2) 1,2-diacylglycerol species, but operates with some preference for the eukaryotic one. Plays a minor role in galactolipid synthesis in chloroplasts. Is essential for membrane lipid remodeling in phosphate-starved roots. Acts as the major factor involved in digalactosyldiacylglycerol (DGDG) biosynthesis in phosphate-starved roots. Does not seem to be required for plant growth under nutrient-sufficient conditions. Required for membrane lipid remodeling in plants grown in acidic conditions. The chain is Monogalactosyldiacylglycerol synthase 3, chloroplastic from Arabidopsis thaliana (Mouse-ear cress).